The following is a 284-amino-acid chain: Tropomyosin (284 aa).

The disordered stretch occupies residues 1-47 (MDAIKKKMQAMKIEKDNAMDRADAAEEKARQQQERVEKLEEELRDTQ). A coiled-coil region spans residues 1–284 (MDAIKKKMQA…DQTFQELSGY (284 aa)). The span at 12–38 (KIEKDNAMDRADAAEEKARQQQERVEK) shows a compositional bias: basic and acidic residues.

The protein belongs to the tropomyosin family.

In terms of biological role, tropomyosin, in association with the troponin complex, plays a central role in the calcium dependent regulation of muscle contraction. This chain is Tropomyosin, found in Trichinella spiralis (Trichina worm).